The chain runs to 292 residues: 2-(5''-triphosphoribosyl)-3'-dephosphocoenzyme-A synthase (292 aa).

It belongs to the CitG/MdcB family.

The catalysed reaction is 3'-dephospho-CoA + ATP = 2'-(5''-triphospho-alpha-D-ribosyl)-3'-dephospho-CoA + adenine. Catalyzes the formation of 2-(5''-triphosphoribosyl)-3'-dephosphocoenzyme-A, the precursor of the prosthetic group of the holo-acyl carrier protein (gamma chain) of citrate lyase, from ATP and dephospho-CoA. The polypeptide is 2-(5''-triphosphoribosyl)-3'-dephosphocoenzyme-A synthase (Escherichia coli O17:K52:H18 (strain UMN026 / ExPEC)).